A 647-amino-acid polypeptide reads, in one-letter code: DNA mismatch repair protein MutL (647 aa).

This sequence belongs to the DNA mismatch repair MutL/HexB family.

This protein is involved in the repair of mismatches in DNA. It is required for dam-dependent methyl-directed DNA mismatch repair. May act as a 'molecular matchmaker', a protein that promotes the formation of a stable complex between two or more DNA-binding proteins in an ATP-dependent manner without itself being part of a final effector complex. In Bacillus cereus (strain ATCC 10987 / NRS 248), this protein is DNA mismatch repair protein MutL.